The sequence spans 192 residues: Fe/S biogenesis protein NfuA (192 aa).

Positions 149 and 152 each coordinate [4Fe-4S] cluster.

This sequence belongs to the NfuA family. In terms of assembly, homodimer. [4Fe-4S] cluster serves as cofactor.

In terms of biological role, involved in iron-sulfur cluster biogenesis. Binds a 4Fe-4S cluster, can transfer this cluster to apoproteins, and thereby intervenes in the maturation of Fe/S proteins. Could also act as a scaffold/chaperone for damaged Fe/S proteins. In Shewanella sediminis (strain HAW-EB3), this protein is Fe/S biogenesis protein NfuA.